Here is a 402-residue protein sequence, read N- to C-terminus: Plasminogen activator inhibitor 1 (402 aa).

The signal sequence occupies residues 1 to 23 (MRMSPVFACLALGLALIFGEGSA). N232, N288, and N352 each carry an N-linked (GlcNAc...) asparagine glycan.

The protein belongs to the serpin family. As to quaternary structure, forms a heterodimer with TMPRSS7. Interacts with VTN. Binds LRP1B; binding is followed by internalization and degradation. Interacts with PPP1CB. In complex with PLAU/uPA, interacts with PLAUR/uPAR. Interacts with SORL1 and LRP1, either alone or in complex with PLAU; these interactions are abolished in the presence of LRPAP1/RAP. The ternary complex composed of PLAUR-PLAU-PAI1 also interacts with SORL1. Interacts with PLAT/tPA. Also interacts with SORL1, when complexed to PLAT/tPA. Vascular endothelial cells may be the primary site of synthesis of plasma PAI1.

The protein localises to the secreted. In terms of biological role, serine protease inhibitor. Inhibits TMPRSS7. Is a primary inhibitor of tissue-type plasminogen activator (PLAT) and urokinase-type plasminogen activator (PLAU). As PLAT inhibitor, it is required for fibrinolysis down-regulation and is responsible for the controlled degradation of blood clots. As PLAU inhibitor, it is involved in the regulation of cell adhesion and spreading. Acts as a regulator of cell migration, independently of its role as protease inhibitor. It is required for stimulation of keratinocyte migration during cutaneous injury repair. It is involved in cellular and replicative senescence. Plays a role in alveolar type 2 cells senescence in the lung. Is involved in the regulation of cementogenic differentiation of periodontal ligament stem cells, and regulates odontoblast differentiation and dentin formation during odontogenesis. This is Plasminogen activator inhibitor 1 (SERPINE1) from Bos taurus (Bovine).